We begin with the raw amino-acid sequence, 108 residues long: Thiosulfate sulfurtransferase GlpE (108 aa).

A Rhodanese domain is found at 17–105; that stretch reads QEKEAVLVDI…WQRQFPAEVA (89 aa). Residue Cys65 is the Cysteine persulfide intermediate of the active site.

Belongs to the GlpE family.

The protein localises to the cytoplasm. It carries out the reaction thiosulfate + hydrogen cyanide = thiocyanate + sulfite + 2 H(+). It catalyses the reaction thiosulfate + [thioredoxin]-dithiol = [thioredoxin]-disulfide + hydrogen sulfide + sulfite + 2 H(+). Functionally, transferase that catalyzes the transfer of sulfur from thiosulfate to thiophilic acceptors such as cyanide or dithiols. May function in a CysM-independent thiosulfate assimilation pathway by catalyzing the conversion of thiosulfate to sulfite, which can then be used for L-cysteine biosynthesis. This chain is Thiosulfate sulfurtransferase GlpE, found in Shigella dysenteriae serotype 1 (strain Sd197).